The chain runs to 464 residues: Multifunctional dye peroxidase DyP2 (464 aa).

The active-site Proton acceptor is aspartate 203. Mn(2+) is bound by residues glutamate 258, glutamate 273, and glutamate 284. A heme-binding site is contributed by histidine 321.

Belongs to the DyP-type peroxidase family. Exists both as a monomeric and oligomeric species in solution; the monomeric form contains no bound heme cofactor and is inactive. Heme b is required as a cofactor. Mn(2+) serves as cofactor.

The protein localises to the secreted. It carries out the reaction 1-(4-hydroxy-3-methoxyphenyl)-2-(2-methoxyphenoxy)propane-1,3-diol + H2O2 = guaiacol + vanillin + glycolaldehyde + H2O. The enzyme catalyses 2 Mn(2+) + H2O2 + 2 H(+) = 2 Mn(3+) + 2 H2O. The catalysed reaction is 2 a phenolic donor + H2O2 = 2 a phenolic radical donor + 2 H2O. It catalyses the reaction Reactive Blue 5 + 2 H2O2 = 2,2'-disulfonyl azobenzene + 3-[(4-amino-6-chloro-1,3,5-triazin-2-yl)amino]benzenesulfonate + phthalate + 2 H2O + 2 H(+). Displays both high peroxidase and manganese peroxidase activity. Is likely involved in lignin degradation. Also has a Mn-dependent oxidase mode of action that expands its substrate scope in vitro; is thus able to catalyze the O(2)- and Mn-dependent oxidative decarboxylation of 4-methoxymandelate to anisaldehyde. The chain is Multifunctional dye peroxidase DyP2 from Amycolatopsis sp. (strain ATCC 39116 / 75iv2).